A 519-amino-acid polypeptide reads, in one-letter code: 2-isopropylmalate synthase (519 aa).

The Pyruvate carboxyltransferase domain maps to 5 to 267 (VIIFDTTLRD…TTNVNPMEIS (263 aa)). Mn(2+) is bound by residues Asp14, His202, His204, and Asn238. A regulatory domain region spans residues 392–519 (RLESINVQSG…KEQLIHIDQV (128 aa)).

Belongs to the alpha-IPM synthase/homocitrate synthase family. LeuA type 1 subfamily. As to quaternary structure, homodimer. Mn(2+) is required as a cofactor.

It localises to the cytoplasm. The catalysed reaction is 3-methyl-2-oxobutanoate + acetyl-CoA + H2O = (2S)-2-isopropylmalate + CoA + H(+). Its pathway is amino-acid biosynthesis; L-leucine biosynthesis; L-leucine from 3-methyl-2-oxobutanoate: step 1/4. Its function is as follows. Catalyzes the condensation of the acetyl group of acetyl-CoA with 3-methyl-2-oxobutanoate (2-ketoisovalerate) to form 3-carboxy-3-hydroxy-4-methylpentanoate (2-isopropylmalate). This chain is 2-isopropylmalate synthase, found in Psychromonas ingrahamii (strain DSM 17664 / CCUG 51855 / 37).